Here is a 175-residue protein sequence, read N- to C-terminus: Large ribosomal subunit protein uL10 (175 aa).

It belongs to the universal ribosomal protein uL10 family. Part of the ribosomal stalk of the 50S ribosomal subunit. The N-terminus interacts with L11 and the large rRNA to form the base of the stalk. The C-terminus forms an elongated spine to which L12 dimers bind in a sequential fashion forming a multimeric L10(L12)X complex.

Its function is as follows. Forms part of the ribosomal stalk, playing a central role in the interaction of the ribosome with GTP-bound translation factors. In Psychrobacter arcticus (strain DSM 17307 / VKM B-2377 / 273-4), this protein is Large ribosomal subunit protein uL10.